A 185-amino-acid polypeptide reads, in one-letter code: Elongation factor P (185 aa).

Belongs to the elongation factor P family.

It is found in the cytoplasm. The protein operates within protein biosynthesis; polypeptide chain elongation. In terms of biological role, involved in peptide bond synthesis. Stimulates efficient translation and peptide-bond synthesis on native or reconstituted 70S ribosomes in vitro. Probably functions indirectly by altering the affinity of the ribosome for aminoacyl-tRNA, thus increasing their reactivity as acceptors for peptidyl transferase. This Nostoc punctiforme (strain ATCC 29133 / PCC 73102) protein is Elongation factor P.